We begin with the raw amino-acid sequence, 333 residues long: Mycothiol acetyltransferase (333 aa).

N-acetyltransferase domains follow at residues 18–170 (PTLS…LPEP) and 176–333 (VTVR…AAAD). E46 contributes to the 1D-myo-inositol 2-(L-cysteinylamino)-2-deoxy-alpha-D-glucopyranoside binding site. 98–100 (IVV) serves as a coordination point for acetyl-CoA. 3 residues coordinate 1D-myo-inositol 2-(L-cysteinylamino)-2-deoxy-alpha-D-glucopyranoside: E203, K242, and E261. Acetyl-CoA is bound by residues 265–267 (VGV) and 272–278 (GGAGLGR). Y299 provides a ligand contact to 1D-myo-inositol 2-(L-cysteinylamino)-2-deoxy-alpha-D-glucopyranoside. 304 to 309 (NERAVR) lines the acetyl-CoA pocket.

This sequence belongs to the acetyltransferase family. MshD subfamily. As to quaternary structure, monomer.

It carries out the reaction 1D-myo-inositol 2-(L-cysteinylamino)-2-deoxy-alpha-D-glucopyranoside + acetyl-CoA = mycothiol + CoA + H(+). Functionally, catalyzes the transfer of acetyl from acetyl-CoA to desacetylmycothiol (Cys-GlcN-Ins) to form mycothiol. This chain is Mycothiol acetyltransferase, found in Frankia alni (strain DSM 45986 / CECT 9034 / ACN14a).